The primary structure comprises 699 residues: tRNA 5-methylaminomethyl-2-thiouridine biosynthesis bifunctional protein MnmC (699 aa).

The segment at 1 to 260 (MTAKPQKSCQ…ERKLLRQQAD (260 aa)) is tRNA (mnm(5)s(2)U34)-methyltransferase. The FAD-dependent cmnm(5)s(2)U34 oxidoreductase stretch occupies residues 282 to 699 (VGGGLASANL…LRKLLKGKAL (418 aa)).

The protein in the N-terminal section; belongs to the methyltransferase superfamily. tRNA (mnm(5)s(2)U34)-methyltransferase family. It in the C-terminal section; belongs to the DAO family. FAD serves as cofactor.

The protein resides in the cytoplasm. The catalysed reaction is 5-aminomethyl-2-thiouridine(34) in tRNA + S-adenosyl-L-methionine = 5-methylaminomethyl-2-thiouridine(34) in tRNA + S-adenosyl-L-homocysteine + H(+). Its function is as follows. Catalyzes the last two steps in the biosynthesis of 5-methylaminomethyl-2-thiouridine (mnm(5)s(2)U) at the wobble position (U34) in tRNA. Catalyzes the FAD-dependent demodification of cmnm(5)s(2)U34 to nm(5)s(2)U34, followed by the transfer of a methyl group from S-adenosyl-L-methionine to nm(5)s(2)U34, to form mnm(5)s(2)U34. This Shewanella sp. (strain MR-4) protein is tRNA 5-methylaminomethyl-2-thiouridine biosynthesis bifunctional protein MnmC.